The chain runs to 287 residues: Probable glucose uptake protein GlcU (287 aa).

9 consecutive transmembrane segments (helical) span residues 7-29, 34-56, 58-75, 114-136, 156-178, 183-202, 209-228, 233-255, and 267-286; these read LIAL…VGGG, IRGT…FAKF, NPTV…WAFG, WSSM…GVAL, MGIL…IFGV, ALFF…SMNH, TALN…FMFY, VGVA…GGIF, and TGIW…LGNL.

The protein belongs to the GRP transporter (TC 2.A.7.5) family.

The protein localises to the cell membrane. Involved in the uptake of glucose. This chain is Probable glucose uptake protein GlcU (glcU), found in Staphylococcus aureus (strain COL).